The sequence spans 173 residues: MKHRDSIEDLYRQYYQEILNYLFRRTHHLETAKDLAQDTFVKALNGLASFRGHSSIRTWLYTIAHHTFINWYRRDVKYQFTEISKNEGLTQTTYDQPEQYLSRTVKSETLRQELLKLKDQHQSVLILREFQELSYEEIAEILGWSLSKVNTTLHRARLELKKNMTKSREEERI.

Belongs to the sigma-70 factor family. ECF subfamily.

Functionally, sigma factors are initiation factors that promote the attachment of RNA polymerase to specific initiation sites and are then released. This sigma factor contributes to oxidative stress resistance. In Bacillus subtilis (strain 168), this protein is RNA polymerase sigma factor YlaC (ylaC).